The sequence spans 189 residues: Resolvase (189 aa).

The Resolvase/invertase-type recombinase catalytic domain maps to 1 to 139 (MLVGYARVST…EGLRSAKARG (139 aa)). Ser-9 serves as the catalytic O-(5'-phospho-DNA)-serine intermediate. The interval 130–151 (EGLRSAKARGRNGGRPSKRNDK) is disordered. A DNA-binding region (H-T-H motif) is located at residues 165-184 (IVDIVKQTELSRATVYRILK).

It belongs to the site-specific recombinase resolvase family.

Functionally, a likely role for the res protein would be to stabilize pCP13 by reducing the number of plasmid multimers resulting from homologous recombination. This is Resolvase (res) from Clostridium perfringens (strain 13 / Type A).